The sequence spans 159 residues: 3-hydroxyacyl-[acyl-carrier-protein] dehydratase FabZ (159 aa).

The active site involves His65.

The protein belongs to the thioester dehydratase family. FabZ subfamily.

It localises to the cytoplasm. It carries out the reaction a (3R)-hydroxyacyl-[ACP] = a (2E)-enoyl-[ACP] + H2O. Its function is as follows. Involved in unsaturated fatty acids biosynthesis. Catalyzes the dehydration of short chain beta-hydroxyacyl-ACPs and long chain saturated and unsaturated beta-hydroxyacyl-ACPs. The protein is 3-hydroxyacyl-[acyl-carrier-protein] dehydratase FabZ of Microcystis aeruginosa (strain NIES-843 / IAM M-2473).